A 297-amino-acid polypeptide reads, in one-letter code: uncharacterized protein (297 aa).

Disordered regions lie at residues 12 to 43, 65 to 85, 122 to 151, and 265 to 297; these read QNNNNNTNNNNNNNNPKASILKNNNNDNTNDN, VPNSINVNTSSSGNKNGDKPI, KVSTTTTTTSSTSKPILPQTITKPNKTNET, and SRLSSNNNNNNNNNNNNNNNNSNLLFFFDDQNN. A compositionally biased stretch (polar residues) spans 65-79; the sequence is VPNSINVNTSSSGNK. The segment covering 122–135 has biased composition (low complexity); that stretch reads KVSTTTTTTSSTSK. The segment covering 140–151 has biased composition (polar residues); the sequence is QTITKPNKTNET. The segment covering 268–287 has biased composition (low complexity); sequence SSNNNNNNNNNNNNNNNNSN.

This is an uncharacterized protein from Dictyostelium discoideum (Social amoeba).